A 215-amino-acid chain; its full sequence is Short neuropeptide F (215 aa).

The N-terminal stretch at 1 to 22 (MCRINFTTLSLILVLWSGSLMS) is a signal peptide. A propeptide spanning residues 23 to 56 (EPSQNADGSIKGLYEYLLQREYAAPVSYADHQIK) is cleaved from the precursor. A phenylalanine amide mark is found at Phe69 and Phe101. Trp129 carries the tryptophan amide modification. At Phe157 the chain carries Phenylalanine amide. A propeptide spanning residues 160–215 (SDPSWAMFNEHQLDEQQFADATRQPSKTLRGDEPTSIESTEQVESEENSPSNMDEK) is cleaved from the precursor. The interval 173-215 (DEQQFADATRQPSKTLRGDEPTSIESTEQVESEENSPSNMDEK) is disordered.

Belongs to the NPY family.

The protein localises to the secreted. Functionally, plays a role in controlling food intake and regulating body size. The polypeptide is Short neuropeptide F (Aedes aegypti (Yellowfever mosquito)).